Consider the following 505-residue polypeptide: 2,3-bisphosphoglycerate-independent phosphoglycerate mutase (505 aa).

Mn(2+) is bound by residues Asp11 and Ser61. Ser61 functions as the Phosphoserine intermediate in the catalytic mechanism. Substrate is bound by residues His122, 152–153 (RD), Arg184, Arg190, 258–261 (RPDR), and Lys331. Mn(2+) contacts are provided by Asp396, His400, Asp437, His438, and His455.

The protein belongs to the BPG-independent phosphoglycerate mutase family. Monomer. It depends on Mn(2+) as a cofactor.

It carries out the reaction (2R)-2-phosphoglycerate = (2R)-3-phosphoglycerate. The protein operates within carbohydrate degradation; glycolysis; pyruvate from D-glyceraldehyde 3-phosphate: step 3/5. In terms of biological role, catalyzes the interconversion of 2-phosphoglycerate and 3-phosphoglycerate. The protein is 2,3-bisphosphoglycerate-independent phosphoglycerate mutase of Mesomycoplasma hyopneumoniae (strain J / ATCC 25934 / NCTC 10110) (Mycoplasma hyopneumoniae).